The primary structure comprises 771 residues: Receptor like protein 22 (771 aa).

Residues 1 to 20 form the signal peptide; it reads MSNLRLRLLSLVSILYCIAA. Topologically, residues 21-729 are extracellular; the sequence is LRCRPDQTET…EEEEILEWRA (709 aa). Asn46, Asn58, Asn80, Asn93, Asn134, and Asn158 each carry an N-linked (GlcNAc...) asparagine glycan. LRR repeat units follow at residues 86 to 110, 112 to 135, 136 to 159, 160 to 183, 185 to 206, 207 to 230, 232 to 254, 255 to 281, 283 to 303, 304 to 327, 329 to 350, and 353 to 377; these read LSHL…AFGQ, NNLE…IRNL, TKLT…VQNL, TKLL…FFTM, FLSY…SNSS, SKLE…VLRL, NLRY…IFSP, LQSL…DFPK, MEIL…LKSL, KKLW…IWSL, LLVS…LDHV, and NSSV…PVSI. The N-linked (GlcNAc...) asparagine glycan is linked to Asn204. A glycan (N-linked (GlcNAc...) asparagine) is linked at Asn242. The N-linked (GlcNAc...) asparagine glycan is linked to Asn292. N-linked (GlcNAc...) asparagine glycosylation is found at Asn337, Asn344, Asn353, Asn379, Asn384, Asn397, Asn410, Asn421, Asn466, and Asn481. One copy of the LRR 13; degenerate repeat lies at 378 to 397; the sequence is INLSAWNNSFTGDIPLSVCN. LRR repeat units lie at residues 398-419, 420-443, 445-467, 469-491, 492-516, 519-543, 588-612, 613-636, 637-660, and 662-685; these read RTSL…PPCM, GNFT…FYSG, LTQT…LLNC, FIRF…LKAL, PNLK…DQSS, FPKL…YFAN, LTFY…IGLL, KTLI…FANV, TELE…LGRL, and YLAY…QIIG. N-linked (GlcNAc...) asparagine glycosylation occurs at Asn543. Asn619, Asn622, and Asn635 each carry an N-linked (GlcNAc...) asparagine glycan. Residues 730-750 form a helical membrane-spanning segment; sequence AAIGYGPGVLFGLAIGHVVAL. Residues 751 to 771 lie on the Cytoplasmic side of the membrane; sequence YKPGWFIKNNGQNRLRGIRHP.

The protein belongs to the RLP family.

The protein localises to the cell membrane. The protein is Receptor like protein 22 of Arabidopsis thaliana (Mouse-ear cress).